Reading from the N-terminus, the 657-residue chain is Glycogen debranching enzyme (657 aa).

The active-site Nucleophile is the Asp336. Glu371 functions as the Proton donor in the catalytic mechanism. The segment covering 458–467 has biased composition (basic and acidic residues); it reads NEANGEENRD. The tract at residues 458-479 is disordered; it reads NEANGEENRDGTNNNYSNNHGK.

The protein belongs to the glycosyl hydrolase 13 family.

The catalysed reaction is Hydrolysis of (1-&gt;6)-alpha-D-glucosidic linkages to branches with degrees of polymerization of three or four glucose residues in limit dextrin.. It functions in the pathway glycan degradation; glycogen degradation. Functionally, removes maltotriose and maltotetraose chains that are attached by 1,6-alpha-linkage to the limit dextrin main chain, generating a debranched limit dextrin. The sequence is that of Glycogen debranching enzyme from Escherichia coli O8 (strain IAI1).